The primary structure comprises 123 residues: Large ribosomal subunit protein bL20 (123 aa).

It belongs to the bacterial ribosomal protein bL20 family.

Functionally, binds directly to 23S ribosomal RNA and is necessary for the in vitro assembly process of the 50S ribosomal subunit. It is not involved in the protein synthesizing functions of that subunit. The polypeptide is Large ribosomal subunit protein bL20 (rplT) (Chlamydia muridarum (strain MoPn / Nigg)).